The sequence spans 561 residues: Lipase maturation factor 1 (561 aa).

A disordered region spans residues 1 to 32; sequence MAAPRESLRRRKAGAGDPEPEAPPGQGRDLKG. The Cytoplasmic portion of the chain corresponds to 1-42; sequence MAAPRESLRRRKAGAGDPEPEAPPGQGRDLKGRPARLRAGTF. A helical membrane pass occupies residues 43 to 65; sequence WLTRIVLLRALAFVYFVAFLVAF. Residues 66 to 120 are Lumenal-facing; it reads HQNKQLIGDRGLLPCRAYLQSVQRHFGGRVSWDALSYAPTILWLLDWSHMDANLD. Residues 121–144 traverse the membrane as a helical segment; that stretch reads ALALLGLGISSFILVSGCANMVLM. The Cytoplasmic segment spans residues 145 to 200; sequence AALWVLYMSLVNVGQIWYSFGWESQLLETGFLGIFLCPLWTLSALPRGTPTSWVVM. The helical transmembrane segment at 201-214 threads the bilayer; the sequence is WGFRWLIFRIMLGA. The Lumenal segment spans residues 215-285; the sequence is GLIKIRGDRC…LGRRMCIVHG (71 aa). Residues 286–314 traverse the membrane as a helical segment; it reads ALQVLFQVVLIISGNLSFLNWLTIVPSLA. Residues 315–360 are Cytoplasmic-facing; it reads CFDDATLGGLFPSGPGRLKDQVLKIQEEETRGARAPRTRGSVARGT. The helical transmembrane segment at 361 to 382 threads the bilayer; sequence VNLALGILVAWLSIPVVLNLLS. Topologically, residues 383 to 561 are lumenal; it reads PRQVMNSSFN…SRQWPYPEPE (179 aa).

Belongs to the lipase maturation factor family. In terms of assembly, interacts with LPL and SEL1L.

Its subcellular location is the endoplasmic reticulum membrane. Its function is as follows. Involved in the maturation of specific proteins in the endoplasmic reticulum. Required for maturation and transport of active lipoprotein lipase (LPL) through the secretory pathway. Each LMF1 molecule chaperones 50 or more molecules of LPL. In Bos taurus (Bovine), this protein is Lipase maturation factor 1 (LMF1).